The following is a 157-amino-acid chain: Endoribonuclease YbeY (157 aa).

The Zn(2+) site is built by His-114, His-118, and His-124.

This sequence belongs to the endoribonuclease YbeY family. Zn(2+) is required as a cofactor.

The protein resides in the cytoplasm. Its function is as follows. Single strand-specific metallo-endoribonuclease involved in late-stage 70S ribosome quality control and in maturation of the 3' terminus of the 16S rRNA. In Caulobacter vibrioides (strain ATCC 19089 / CIP 103742 / CB 15) (Caulobacter crescentus), this protein is Endoribonuclease YbeY.